We begin with the raw amino-acid sequence, 589 residues long: Type I restriction enzyme EcoAI specificity subunit (589 aa).

Belongs to the type-I restriction system S methylase family. As to quaternary structure, the type I restriction/modification system is composed of three polypeptides R, M and S. The restriction enzyme has stoichiometry R(2)M(2)S(1) while the methyltransferase is M(2)S(1).

In terms of biological role, the specificity (S) subunit of a type I restriction enzyme; this subunit dictates DNA sequence specificity. The M and S subunits together form a methyltransferase (MTase) that methylates A-2 on the top strand and A-3 on the bottom strand of the sequence 5'-GAGN(7)GTCA-3'. In the presence of the R subunit the complex can also act as an endonuclease, binding to the same target sequence but cutting the DNA some distance from this site. Whether the DNA is cut or modified depends on the methylation state of the target sequence. When the target site is unmodified, the DNA is cut. When the target site is hemimethylated, the complex acts as a maintenance MTase modifying the DNA so that both strands become methylated. After locating a non-methylated recognition site, the enzyme complex serves as a molecular motor that translocates DNA in an ATP-dependent manner until a collision occurs that triggers cleavage. The sequence is that of Type I restriction enzyme EcoAI specificity subunit from Escherichia coli.